The chain runs to 471 residues: Glutamate--tRNA ligase (471 aa).

The 'HIGH' region motif lies at 9-19; the sequence is PSPTGFLHVGG. Cysteine 98, cysteine 100, cysteine 125, and aspartate 127 together coordinate Zn(2+). Positions 237–241 match the 'KMSKS' region motif; that stretch reads KLSKR. Residue lysine 240 participates in ATP binding.

Belongs to the class-I aminoacyl-tRNA synthetase family. Glutamate--tRNA ligase type 1 subfamily. As to quaternary structure, monomer. Zn(2+) is required as a cofactor.

It is found in the cytoplasm. It catalyses the reaction tRNA(Glu) + L-glutamate + ATP = L-glutamyl-tRNA(Glu) + AMP + diphosphate. Catalyzes the attachment of glutamate to tRNA(Glu) in a two-step reaction: glutamate is first activated by ATP to form Glu-AMP and then transferred to the acceptor end of tRNA(Glu). This chain is Glutamate--tRNA ligase, found in Aeromonas salmonicida (strain A449).